Here is a 239-residue protein sequence, read N- to C-terminus: Glutathione S-transferase verG (239 aa).

A GST N-terminal domain is found at 18 to 101 (KPLIFVMEGR…YLSNKYDAKR (84 aa)). In terms of domain architecture, GST C-terminal spans 107-237 (NAAENLEICN…ELDSRKEIAI (131 aa)).

It belongs to the GST superfamily.

It catalyses the reaction RX + glutathione = an S-substituted glutathione + a halide anion + H(+). It functions in the pathway mycotoxin biosynthesis. Functionally, glutathione S-transferase; part of the gene cluster that mediates the biosynthesis of 11'-deoxyverticillin A, one of the dimeric epipolythiodioxopiperazines (ETPs) from the verticillin family that act as mycotoxins. 11'-deoxyverticillin A is required for normal conidiation. The nonribosomal peptide synthetase verP is speculated to be responsible for condensation of amino acids to form the carbon skeleton of verticillin, whereas the cluster-specific tailoring enzymes are involved in further modifications leading to the production of 11'-deoxyverticillin A. In Clonostachys rogersoniana, this protein is Glutathione S-transferase verG.